We begin with the raw amino-acid sequence, 159 residues long: Acetolactate synthase small subunit (159 aa).

The 75-residue stretch at 5–79 (ILSILLENES…DVLKVTEIED (75 aa)) folds into the ACT domain.

Belongs to the acetolactate synthase small subunit family. In terms of assembly, dimer of large and small chains.

It catalyses the reaction 2 pyruvate + H(+) = (2S)-2-acetolactate + CO2. It participates in amino-acid biosynthesis; L-isoleucine biosynthesis; L-isoleucine from 2-oxobutanoate: step 1/4. It functions in the pathway amino-acid biosynthesis; L-valine biosynthesis; L-valine from pyruvate: step 1/4. This Buchnera aphidicola subsp. Baizongia pistaciae (strain Bp) protein is Acetolactate synthase small subunit (ilvH).